The following is a 400-amino-acid chain: Multidrug resistance protein MdtH (400 aa).

10 helical membrane-spanning segments follow: residues 13-33 (YFLL…FPLI), 34-54 (SIRF…ALGL), 99-116 (PWIL…GTLF), 139-159 (LLLM…SWLL), 165-185 (LVCW…AWLL), 214-234 (VLTL…FPIV), 244-264 (AVKW…YPIA), 289-309 (FPVG…LFYL), 340-360 (LGLA…YDIG), and 365-385 (LPEL…YALH).

The protein belongs to the major facilitator superfamily. DHA1 family. MdtH (TC 2.A.1.2.21) subfamily.

The protein localises to the cell inner membrane. The sequence is that of Multidrug resistance protein MdtH from Proteus mirabilis (strain HI4320).